Reading from the N-terminus, the 321-residue chain is Phospholipid phosphatase-related protein type 5 (321 aa).

6 helical membrane passes run 6 to 26 (VALISSMLYFQMVIMAGTVML), 62 to 82 (AVPPVLLYSLAAGVPVLVIIV), 122 to 142 (FLGIYAFGLFATDIFVNAGQV), 196 to 213 (AALSVYAATYLTMYITST), 225 to 245 (VLCLGLMCLAFLTGLNRVAEY), and 252 to 272 (VIAGFLVGISIAVFLVVCVVN).

Belongs to the PA-phosphatase related phosphoesterase family.

It localises to the cell membrane. Induces filopodia formation and promotes neurite growth in a CDC42-independent manner; impedes neurite growth inhibitory-mediated axonal retraction. In Mus musculus (Mouse), this protein is Phospholipid phosphatase-related protein type 5.